Reading from the N-terminus, the 429-residue chain is Cell wall protein ECM33 (429 aa).

A signal peptide spans 1 to 19 (MQFKNALTATAILSASALA). N-linked (GlcNAc...) asparagine glycans are attached at residues N21, N56, N82, N196, N209, N227, N234, N241, N267, N279, N304, and N328. Phosphoserine is present on S339. Residues 361–401 (LSSTSTESSKSSATSSASSSGDASNAQANVSASASSSSSSS) are compositionally biased toward low complexity. Residues 361 to 410 (LSSTSTESSKSSATSSASSSGDASNAQANVSASASSSSSSSKKSKGAAPE) form a disordered region. Residue N389 is glycosylated (N-linked (GlcNAc...) asparagine). G406 is lipidated: GPI-anchor amidated glycine. The propeptide at 407–429 (AAPELVPATSFMGVVAAVGVALL) is removed in mature form.

It belongs to the SPS2 family. Post-translationally, the GPI-anchor is attached to the protein in the endoplasmic reticulum and serves to target the protein to the cell surface. There, the glucosamine-inositol phospholipid moiety is cleaved off and the GPI-modified mannoprotein is covalently attached via its lipidless GPI glycan remnant to the 1,6-beta-glucan of the outer cell wall layer. In terms of processing, extensively N-glycosylated.

It localises to the cell membrane. Its subcellular location is the secreted. It is found in the cell wall. Its function is as follows. Required for proper cell wall integrity and for the correct assembly of the mannoprotein outer layer of the cell wall. Important for apical bud growth. In Saccharomyces cerevisiae (strain ATCC 204508 / S288c) (Baker's yeast), this protein is Cell wall protein ECM33 (ECM33).